Reading from the N-terminus, the 166-residue chain is MSKAIIAKKEKLVDDFAAELKEAKAILVIDYLGLTVEEVTNLRKDLRDANVKMKVIKNTYLKRAAEKAGIEGLEDTFVGPTAVVYTADAEDITEPARIVSKYEDDIDALSIKGGMLEGKVASQEEIKKLAAIPGREGLLSMLVSVLQAPVRNFAYAVKAVADSKDE.

The protein belongs to the universal ribosomal protein uL10 family. In terms of assembly, part of the ribosomal stalk of the 50S ribosomal subunit. The N-terminus interacts with L11 and the large rRNA to form the base of the stalk. The C-terminus forms an elongated spine to which L12 dimers bind in a sequential fashion forming a multimeric L10(L12)X complex.

Functionally, forms part of the ribosomal stalk, playing a central role in the interaction of the ribosome with GTP-bound translation factors. In Lactobacillus johnsonii (strain CNCM I-12250 / La1 / NCC 533), this protein is Large ribosomal subunit protein uL10.